Consider the following 179-residue polypeptide: Large ribosomal subunit protein uL6 (179 aa).

The protein belongs to the universal ribosomal protein uL6 family. As to quaternary structure, part of the 50S ribosomal subunit.

Functionally, this protein binds to the 23S rRNA, and is important in its secondary structure. It is located near the subunit interface in the base of the L7/L12 stalk, and near the tRNA binding site of the peptidyltransferase center. This chain is Large ribosomal subunit protein uL6, found in Bacillus subtilis (strain 168).